We begin with the raw amino-acid sequence, 95 residues long: Cell division topological specificity factor (95 aa).

Belongs to the MinE family.

Its function is as follows. Prevents the cell division inhibition by proteins MinC and MinD at internal division sites while permitting inhibition at polar sites. This ensures cell division at the proper site by restricting the formation of a division septum at the midpoint of the long axis of the cell. The protein is Cell division topological specificity factor of Methylorubrum extorquens (strain PA1) (Methylobacterium extorquens).